The sequence spans 160 residues: Transcription elongation factor GreA (160 aa).

Residues methionine 1–arginine 72 are a coiled coil.

The protein belongs to the GreA/GreB family.

Its function is as follows. Necessary for efficient RNA polymerase transcription elongation past template-encoded arresting sites. The arresting sites in DNA have the property of trapping a certain fraction of elongating RNA polymerases that pass through, resulting in locked ternary complexes. Cleavage of the nascent transcript by cleavage factors such as GreA or GreB allows the resumption of elongation from the new 3'terminus. GreA releases sequences of 2 to 3 nucleotides. The chain is Transcription elongation factor GreA from Streptococcus pneumoniae (strain ATCC 700669 / Spain 23F-1).